The following is a 281-amino-acid chain: 4-diphosphocytidyl-2-C-methyl-D-erythritol kinase (281 aa).

Lysine 11 is a catalytic residue. 92–102 (LVSAGLAGGSA) provides a ligand contact to ATP. Aspartate 132 is a catalytic residue.

Belongs to the GHMP kinase family. IspE subfamily.

It catalyses the reaction 4-CDP-2-C-methyl-D-erythritol + ATP = 4-CDP-2-C-methyl-D-erythritol 2-phosphate + ADP + H(+). It participates in isoprenoid biosynthesis; isopentenyl diphosphate biosynthesis via DXP pathway; isopentenyl diphosphate from 1-deoxy-D-xylulose 5-phosphate: step 3/6. Catalyzes the phosphorylation of the position 2 hydroxy group of 4-diphosphocytidyl-2C-methyl-D-erythritol. This is 4-diphosphocytidyl-2-C-methyl-D-erythritol kinase from Ehrlichia ruminantium (strain Gardel).